The primary structure comprises 434 residues: Eukaryotic translation initiation factor 3 subunit E (434 aa).

The region spanning 219–392 (FFNHPKGRDL…GHVVMGTQPL (174 aa)) is the PCI domain.

This sequence belongs to the eIF-3 subunit E family. As to quaternary structure, component of the eukaryotic translation initiation factor 3 (eIF-3) complex. The eIF-3 complex interacts with pix. Interacts with mxt.

It localises to the cytoplasm. Its function is as follows. Component of the eukaryotic translation initiation factor 3 (eIF-3) complex, which is involved in protein synthesis of a specialized repertoire of mRNAs and, together with other initiation factors, stimulates binding of mRNA and methionyl-tRNAi to the 40S ribosome. The eIF-3 complex specifically targets and initiates translation of a subset of mRNAs involved in cell proliferation. The polypeptide is Eukaryotic translation initiation factor 3 subunit E (eIF3-S6) (Drosophila ananassae (Fruit fly)).